We begin with the raw amino-acid sequence, 241 residues long: Uridylate kinase (241 aa).

15–18 (KLSG) lines the ATP pocket. The tract at residues 23–28 (GSEGFG) is involved in allosteric activation by GTP. Residue Gly57 participates in UMP binding. Gly58 and Arg62 together coordinate ATP. UMP contacts are provided by residues Asp77 and 138-145 (TGNPFCTT). Residues Thr165, Tyr171, and Asp174 each coordinate ATP.

The protein belongs to the UMP kinase family. As to quaternary structure, homohexamer.

The protein resides in the cytoplasm. It catalyses the reaction UMP + ATP = UDP + ADP. It participates in pyrimidine metabolism; CTP biosynthesis via de novo pathway; UDP from UMP (UMPK route): step 1/1. Its activity is regulated as follows. Allosterically activated by GTP. Inhibited by UTP. Its function is as follows. Catalyzes the reversible phosphorylation of UMP to UDP. The protein is Uridylate kinase of Shewanella amazonensis (strain ATCC BAA-1098 / SB2B).